Consider the following 177-residue polypeptide: Large ribosomal subunit protein uL6 (177 aa).

This sequence belongs to the universal ribosomal protein uL6 family. In terms of assembly, part of the 50S ribosomal subunit.

This protein binds to the 23S rRNA, and is important in its secondary structure. It is located near the subunit interface in the base of the L7/L12 stalk, and near the tRNA binding site of the peptidyltransferase center. In Herminiimonas arsenicoxydans, this protein is Large ribosomal subunit protein uL6.